The primary structure comprises 331 residues: Protein Brevis radix-like 1 (331 aa).

Residues 1-111 (MFTCINCTKM…HQSGRPDSRF (111 aa)) are disordered. Polar residues-rich tracts occupy residues 25-41 (STTP…TTQI) and 48-66 (FSGS…SSNL). One can recognise a BRX 1 domain in the interval 137–192 (KEWMAQVEPGVHITFVSLPSGGNDLKRIRFSREVFDKWQAQRWWGENYDRIVELYN). 2 disordered regions span residues 201-246 (LQTP…VPHH) and 258-279 (TTSS…GEWV). Residues 221–235 (DSARESRDWTQRDNN) show a composition bias toward basic and acidic residues. The 56-residue stretch at 276 to 331 (GEWVEEDEPGVYITIRQLPDGTRELRRVRFSRERFGEVHAKTWWEQNRDRIQTQYL) folds into the BRX 2 domain.

It belongs to the BRX family. Heterodimer with BRXL1. As to expression, expressed in roots.

The protein localises to the nucleus. Functionally, may act as a regulator of cell proliferation and elongation in the root. The polypeptide is Protein Brevis radix-like 1 (BRXL1) (Arabidopsis thaliana (Mouse-ear cress)).